We begin with the raw amino-acid sequence, 130 residues long: Small ribosomal subunit protein uS9 (130 aa).

The protein belongs to the universal ribosomal protein uS9 family.

The chain is Small ribosomal subunit protein uS9 from Albidiferax ferrireducens (strain ATCC BAA-621 / DSM 15236 / T118) (Rhodoferax ferrireducens).